A 418-amino-acid polypeptide reads, in one-letter code: Maltoporin (418 aa).

Residues 1–26 (MLPMNRNTLGLAVTIATVFVSSTVTA) form the signal peptide.

This sequence belongs to the porin LamB (TC 1.B.3) family. As to quaternary structure, homotrimer formed of three 18-stranded antiparallel beta-barrels, containing three independent channels.

The protein resides in the cell outer membrane. It catalyses the reaction beta-maltose(in) = beta-maltose(out). Functionally, involved in the transport of maltose and maltodextrins. This is Maltoporin from Photobacterium profundum (strain SS9).